The chain runs to 125 residues: PCNA-associated factor (125 aa).

A disordered region spans residues 1 to 125 (MVRTKADSAG…SEEAADSDDE (125 aa)). The span at 8 to 17 (SAGSSASSGS) shows a compositional bias: low complexity. The short motif at 28–39 (RKTFGSSSSGSN) is the D-box element. A PIP-box motif is present at residues 68–79 (QKGIGEFFGSPS). Residues 85 to 87 (KEN) carry the KEN box motif. An Initiation motif motif is present at residues 95-107 (EAGGSGAGKAPRK). The segment covering 115-125 (PSEEAADSDDE) has biased composition (acidic residues).

In terms of assembly, interacts with pcna.

The protein localises to the nucleus. The protein resides in the cytoplasm. It localises to the perinuclear region. Its function is as follows. PCNA-binding protein that acts as a regulator of DNA repair during DNA replication. Following DNA damage, the interaction with pcna is disrupted, facilitating the interaction between monoubiquitinated pcna and the translesion DNA synthesis DNA polymerase eta (polh) at stalled replisomes, facilitating the bypass of replication-fork-blocking lesions. Also acts as a regulator of centrosome number. This is PCNA-associated factor from Xenopus tropicalis (Western clawed frog).